The chain runs to 101 residues: Small ribosomal subunit protein bS18c (101 aa).

The span at 1–19 shows a compositional bias: basic residues; the sequence is MDKSKQPFHKTKRSFRRRL. The segment at 1 to 23 is disordered; the sequence is MDKSKQPFHKTKRSFRRRLPPIG.

The protein belongs to the bacterial ribosomal protein bS18 family. As to quaternary structure, part of the 30S ribosomal subunit.

It is found in the plastid. It localises to the chloroplast. The sequence is that of Small ribosomal subunit protein bS18c from Lemna minor (Common duckweed).